Consider the following 228-residue polypeptide: Aquaporin Z (228 aa).

2 consecutive transmembrane segments (helical) span residues Met-1–Gly-21 and Ala-23–Phe-43. Positions Asn-63–Ala-65 match the NPA 1 motif. Transmembrane regions (helical) follow at residues Ile-82 to Ile-102, Met-129 to Gly-149, and Leu-154 to Val-174. The NPA 2 motif lies at Asn-184 to Ala-186. The chain crosses the membrane as a helical span at residues Leu-205–Leu-225.

This sequence belongs to the MIP/aquaporin (TC 1.A.8) family. Homotetramer.

The protein resides in the cell inner membrane. The catalysed reaction is H2O(in) = H2O(out). Its function is as follows. Channel that permits osmotically driven movement of water in both directions. It is involved in the osmoregulation and in the maintenance of cell turgor during volume expansion in rapidly growing cells. It mediates rapid entry or exit of water in response to abrupt changes in osmolarity. This chain is Aquaporin Z, found in Brucella melitensis biotype 1 (strain ATCC 23456 / CCUG 17765 / NCTC 10094 / 16M).